Reading from the N-terminus, the 238-residue chain is Ribonuclease PH (238 aa).

The segment at 64–86 (GMLPRSTGSRMDREAARGKQSGR) is disordered. Phosphate contacts are provided by residues Arg-86 and 124–126 (GTR).

It belongs to the RNase PH family. As to quaternary structure, homohexameric ring arranged as a trimer of dimers.

It carries out the reaction tRNA(n+1) + phosphate = tRNA(n) + a ribonucleoside 5'-diphosphate. Functionally, phosphorolytic 3'-5' exoribonuclease that plays an important role in tRNA 3'-end maturation. Removes nucleotide residues following the 3'-CCA terminus of tRNAs; can also add nucleotides to the ends of RNA molecules by using nucleoside diphosphates as substrates, but this may not be physiologically important. Probably plays a role in initiation of 16S rRNA degradation (leading to ribosome degradation) during starvation. The sequence is that of Ribonuclease PH from Methylobacillus flagellatus (strain ATCC 51484 / DSM 6875 / VKM B-1610 / KT).